Here is a 99-residue protein sequence, read N- to C-terminus: UPF0235 protein Sbal223_1335 (99 aa).

It belongs to the UPF0235 family.

The sequence is that of UPF0235 protein Sbal223_1335 from Shewanella baltica (strain OS223).